We begin with the raw amino-acid sequence, 557 residues long: Carbamoyl phosphate synthase large chain, N-terminal section (557 aa).

Residues 1-402 (MPKRTDIKKI…ALLKAVRSLE (402 aa)) form a carboxyphosphate synthetic domain region. Residues arginine 129, arginine 169, glycine 175, glycine 176, lysine 208, leucine 210, glutamate 215, glycine 241, valine 242, histidine 243, glutamine 285, and glutamate 299 each coordinate ATP. The ATP-grasp domain maps to 133–328 (KETMESIGLK…IAKVAAKLAV (196 aa)). Residues glutamine 285, glutamate 299, and asparagine 301 each contribute to the Mg(2+) site. Residues glutamine 285, glutamate 299, and asparagine 301 each contribute to the Mn(2+) site. Residues 403–553 (LDRYGLAFPK…PYYTVDGQEI (151 aa)) form an oligomerization domain region.

This sequence belongs to the CarB family. In terms of assembly, composed of two chains; the small (or glutamine) chain promotes the hydrolysis of glutamine to ammonia, which is used by the large (or ammonia) chain to synthesize carbamoyl phosphate. Tetramer of heterodimers (alpha,beta)4. The cofactor is Mg(2+). Mn(2+) is required as a cofactor.

It catalyses the reaction hydrogencarbonate + L-glutamine + 2 ATP + H2O = carbamoyl phosphate + L-glutamate + 2 ADP + phosphate + 2 H(+). The catalysed reaction is hydrogencarbonate + NH4(+) + 2 ATP = carbamoyl phosphate + 2 ADP + phosphate + 2 H(+). It participates in amino-acid biosynthesis; L-arginine biosynthesis; carbamoyl phosphate from bicarbonate: step 1/1. Its pathway is pyrimidine metabolism; UMP biosynthesis via de novo pathway; (S)-dihydroorotate from bicarbonate: step 1/3. Large subunit of the glutamine-dependent carbamoyl phosphate synthetase (CPSase). CPSase catalyzes the formation of carbamoyl phosphate from the ammonia moiety of glutamine, carbonate, and phosphate donated by ATP, constituting the first step of 2 biosynthetic pathways, one leading to arginine and/or urea and the other to pyrimidine nucleotides. The large subunit (synthetase) binds the substrates ammonia (free or transferred from glutamine from the small subunit), hydrogencarbonate and ATP and carries out an ATP-coupled ligase reaction, activating hydrogencarbonate by forming carboxy phosphate which reacts with ammonia to form carbamoyl phosphate. This is Carbamoyl phosphate synthase large chain, N-terminal section (carB1) from Aquifex aeolicus (strain VF5).